A 101-amino-acid polypeptide reads, in one-letter code: Small ribosomal subunit protein uS10 (101 aa).

Belongs to the universal ribosomal protein uS10 family. As to quaternary structure, part of the 30S ribosomal subunit.

Its function is as follows. Involved in the binding of tRNA to the ribosomes. This is Small ribosomal subunit protein uS10 from Mycobacteroides abscessus (strain ATCC 19977 / DSM 44196 / CCUG 20993 / CIP 104536 / JCM 13569 / NCTC 13031 / TMC 1543 / L948) (Mycobacterium abscessus).